Reading from the N-terminus, the 603-residue chain is Replication protein A 70 kDa DNA-binding subunit (603 aa).

Residues Pro-131–Asn-152 form a disordered region. Ser-160 carries the post-translational modification Phosphoserine. A DNA-binding region (OB) is located at residues Trp-179–Ser-252. Position 420 is a phosphoserine (Ser-420). Residues Cys-464–Cys-486 form a C4-type zinc finger.

This sequence belongs to the replication factor A protein 1 family. Component of the heterotrimeric canonical replication protein A complex (RPA).

The protein resides in the nucleus. As part of the heterotrimeric replication protein A complex (RPA/RP-A), binds and stabilizes single-stranded DNA intermediates, that form during DNA replication or upon DNA stress. It prevents their reannealing and in parallel, recruits and activates different proteins and complexes involved in DNA metabolism. Thereby, it plays an essential role both in DNA replication and the cellular response to DNA damage. The sequence is that of Replication protein A 70 kDa DNA-binding subunit from Drosophila melanogaster (Fruit fly).